Here is a 104-residue protein sequence, read N- to C-terminus: Small ribosomal subunit protein uS10 (104 aa).

The protein belongs to the universal ribosomal protein uS10 family. As to quaternary structure, part of the 30S ribosomal subunit.

In terms of biological role, involved in the binding of tRNA to the ribosomes. The polypeptide is Small ribosomal subunit protein uS10 (Alkaliphilus metalliredigens (strain QYMF)).